Consider the following 156-residue polypeptide: Phosphoribosyl-AMP cyclohydrolase (156 aa).

Mg(2+) is bound at residue aspartate 106. Zn(2+) is bound at residue cysteine 107. 2 residues coordinate Mg(2+): aspartate 108 and aspartate 110. The Zn(2+) site is built by cysteine 123 and cysteine 130.

It belongs to the PRA-CH family. In terms of assembly, homodimer. It depends on Mg(2+) as a cofactor. Requires Zn(2+) as cofactor.

Its subcellular location is the cytoplasm. The enzyme catalyses 1-(5-phospho-beta-D-ribosyl)-5'-AMP + H2O = 1-(5-phospho-beta-D-ribosyl)-5-[(5-phospho-beta-D-ribosylamino)methylideneamino]imidazole-4-carboxamide. Its pathway is amino-acid biosynthesis; L-histidine biosynthesis; L-histidine from 5-phospho-alpha-D-ribose 1-diphosphate: step 3/9. Its function is as follows. Catalyzes the hydrolysis of the adenine ring of phosphoribosyl-AMP. This is Phosphoribosyl-AMP cyclohydrolase from Gluconobacter oxydans (strain 621H) (Gluconobacter suboxydans).